The sequence spans 102 residues: MICOS complex subunit MIC12 (102 aa).

The helical transmembrane segment at 4 to 26 (VLKLTSVTLAASSLAAAGYFYAF) threads the bilayer.

The protein belongs to the MICOS complex subunit Mic12 family. In terms of assembly, component of the mitochondrial contact site and cristae organizing system (MICOS) complex.

The protein localises to the mitochondrion inner membrane. In terms of biological role, component of the MICOS complex, a large protein complex of the mitochondrial inner membrane that plays crucial roles in the maintenance of crista junctions, inner membrane architecture, and formation of contact sites to the outer membrane. This Lachancea thermotolerans (strain ATCC 56472 / CBS 6340 / NRRL Y-8284) (Yeast) protein is MICOS complex subunit MIC12 (AIM5).